We begin with the raw amino-acid sequence, 962 residues long: Glycine dehydrogenase (decarboxylating) (962 aa).

K709 is subject to N6-(pyridoxal phosphate)lysine.

Belongs to the GcvP family. In terms of assembly, the glycine cleavage system is composed of four proteins: P, T, L and H. Pyridoxal 5'-phosphate is required as a cofactor.

It catalyses the reaction N(6)-[(R)-lipoyl]-L-lysyl-[glycine-cleavage complex H protein] + glycine + H(+) = N(6)-[(R)-S(8)-aminomethyldihydrolipoyl]-L-lysyl-[glycine-cleavage complex H protein] + CO2. Its function is as follows. The glycine cleavage system catalyzes the degradation of glycine. The P protein binds the alpha-amino group of glycine through its pyridoxal phosphate cofactor; CO(2) is released and the remaining methylamine moiety is then transferred to the lipoamide cofactor of the H protein. This chain is Glycine dehydrogenase (decarboxylating), found in Shewanella amazonensis (strain ATCC BAA-1098 / SB2B).